A 465-amino-acid polypeptide reads, in one-letter code: Argininosuccinate lyase (465 aa).

Belongs to the lyase 1 family. Argininosuccinate lyase subfamily.

It localises to the cytoplasm. The enzyme catalyses 2-(N(omega)-L-arginino)succinate = fumarate + L-arginine. The protein operates within amino-acid biosynthesis; L-arginine biosynthesis; L-arginine from L-ornithine and carbamoyl phosphate: step 3/3. In Methylococcus capsulatus (strain ATCC 33009 / NCIMB 11132 / Bath), this protein is Argininosuccinate lyase.